Here is a 579-residue protein sequence, read N- to C-terminus: Fatty-acid amide hydrolase 1 (579 aa).

A helical transmembrane segment spans residues 9–29; the sequence is TLSGVSGVCLACSLLSAAVVL. The Cytoplasmic portion of the chain corresponds to 30 to 403; it reads RWTGRQKARG…GDFVDPCLGD (374 aa). K142 (charge relay system) is an active-site residue. Residues M191, S217, and 238–241 each bind substrate; that span reads IGGS. S217 serves as the catalytic Charge relay system. Catalysis depends on S241, which acts as the Acyl-ester intermediate. At S241 the chain carries Phosphoserine. Residues 404–433 lie within the membrane without spanning it; it reads LILILRLPSWFKRLLSLLLKPLFPRLAAFL. The Cytoplasmic portion of the chain corresponds to 434–579; it reads NSMRPRSAEK…QLMTPQKQPS (146 aa).

This sequence belongs to the amidase family. As to quaternary structure, homodimer. In terms of tissue distribution, found in neuronal cells throughout the CNS. Expressed in liver and brain, and to a lesser extent in spleen, lung, kidney and testes.

It localises to the endoplasmic reticulum membrane. It is found in the golgi apparatus membrane. It catalyses the reaction N-(5Z,8Z,11Z,14Z-eicosatetraenoyl)-ethanolamine + H2O = ethanolamine + (5Z,8Z,11Z,14Z)-eicosatetraenoate. It carries out the reaction (9Z)-octadecenamide + H2O = (9Z)-octadecenoate + NH4(+). The catalysed reaction is 2-(5Z,8Z,11Z,14Z-eicosatetraenoyl)-glycerol + H2O = glycerol + (5Z,8Z,11Z,14Z)-eicosatetraenoate + H(+). The enzyme catalyses (9Z,12Z,15Z)-octadecatrienamide + H2O = (9Z,12Z,15Z)-octadecatrienoate + NH4(+). It catalyses the reaction (5Z,8Z,11Z,14Z)-eicosatetraenamide + H2O = (5Z,8Z,11Z,14Z)-eicosatetraenoate + NH4(+). It carries out the reaction (6Z)-octadecenamide + H2O = (6Z)-octadecenoate + NH4(+). The catalysed reaction is (15Z)-tetracosenamide + H2O = (15Z)-tetracosenoate + NH4(+). The enzyme catalyses (8Z,11Z,14Z)-eicosatrienamide + H2O = (8Z,11Z,14Z)-eicosatrienoate + NH4(+). It catalyses the reaction (11Z,14Z,17Z)-eicosatrienamide + H2O = (11Z,14Z,17Z)-eicosatrienoate + NH4(+). It carries out the reaction (11Z,14Z)-eicosadienamide + H2O = (11Z,14Z)-eicosadienoate + NH4(+). The catalysed reaction is (9Z,12Z)-octadecadienamide + H2O = (9Z,12Z)-octadecadienoate + NH4(+). The enzyme catalyses tetradecamide + H2O = tetradecanoate + NH4(+). It catalyses the reaction N-(9Z-octadecenoyl) ethanolamine + H2O = ethanolamine + (9Z)-octadecenoate. It carries out the reaction N-(9Z-octadecenoyl)-taurine + H2O = taurine + (9Z)-octadecenoate. The catalysed reaction is 1-O-methyl-(5Z,8Z,11Z,14Z)-eicosatetraenoate + H2O = methanol + (5Z,8Z,11Z,14Z)-eicosatetraenoate + H(+). The enzyme catalyses (11Z)-eicosenamide + H2O = (11Z)-eicosenoate + NH4(+). It catalyses the reaction N-(9Z-hexadecenoyl) ethanolamine + H2O = (9Z)-hexadecenoate + ethanolamine. It carries out the reaction N-octadecanoyl ethanolamine + H2O = octadecanoate + ethanolamine. The catalysed reaction is N-docosanoyl-ethanolamine + H2O = docosanoate + ethanolamine. The enzyme catalyses N-tetracosanoyl-taurine + H2O = tetracosanoate + taurine. It catalyses the reaction N-(15Z-tetracosenoyl)-ethanolamine + H2O = (15Z)-tetracosenoate + ethanolamine. It carries out the reaction N-docosanoyl-taurine + H2O = docosanoate + taurine. The catalysed reaction is N-(15Z-tetracosenoyl)-taurine + H2O = (15Z)-tetracosenoate + taurine. The enzyme catalyses N-tricosanoyl-taurine + H2O = tricosanoate + taurine. It catalyses the reaction (9Z)-octadecenoate + glycine = N-(9Z-octadecenoyl)glycine + H2O. It carries out the reaction N-(5Z,8Z,11Z,14Z)-eicosatetraenoyl-glycine + H2O = (5Z,8Z,11Z,14Z)-eicosatetraenoate + glycine. The catalysed reaction is N-(5Z,8Z,11Z,14Z-eicosatetraenoyl)-L-serine + H2O = (5Z,8Z,11Z,14Z)-eicosatetraenoate + L-serine. Inhibited by trifluoromethyl ketone. Catalyzes the hydrolysis of endogenous amidated lipids like the sleep-inducing lipid oleamide ((9Z)-octadecenamide), the endocannabinoid anandamide (N-(5Z,8Z,11Z,14Z-eicosatetraenoyl)-ethanolamine), as well as other fatty amides, to their corresponding fatty acids, thereby regulating the signaling functions of these molecules. Hydrolyzes polyunsaturated substrate anandamide preferentially as compared to monounsaturated substrates. It can also catalyze the hydrolysis of the endocannabinoid 2-arachidonoylglycerol (2-(5Z,8Z,11Z,14Z-eicosatetraenoyl)-glycerol). FAAH cooperates with PM20D1 in the hydrolysis of amino acid-conjugated fatty acids such as N-fatty acyl glycine and N-fatty acyl-L-serine, thereby acting as a physiological regulator of specific subsets of intracellular, but not of extracellular, N-fatty acyl amino acids. This Rattus norvegicus (Rat) protein is Fatty-acid amide hydrolase 1 (Faah).